Consider the following 266-residue polypeptide: Thymidylate synthase (266 aa).

R24 contributes to the dUMP binding site. H54 serves as a coordination point for (6R)-5,10-methylene-5,6,7,8-tetrahydrofolate. 129–130 (RR) lines the dUMP pocket. Catalysis depends on C149, which acts as the Nucleophile. DUMP-binding positions include 169-172 (RSAD), N180, and 210-212 (HIY). A (6R)-5,10-methylene-5,6,7,8-tetrahydrofolate-binding site is contributed by D172. A265 lines the (6R)-5,10-methylene-5,6,7,8-tetrahydrofolate pocket.

It belongs to the thymidylate synthase family. Bacterial-type ThyA subfamily. In terms of assembly, homodimer.

The protein localises to the cytoplasm. It catalyses the reaction dUMP + (6R)-5,10-methylene-5,6,7,8-tetrahydrofolate = 7,8-dihydrofolate + dTMP. The protein operates within pyrimidine metabolism; dTTP biosynthesis. Functionally, catalyzes the reductive methylation of 2'-deoxyuridine-5'-monophosphate (dUMP) to 2'-deoxythymidine-5'-monophosphate (dTMP) while utilizing 5,10-methylenetetrahydrofolate (mTHF) as the methyl donor and reductant in the reaction, yielding dihydrofolate (DHF) as a by-product. This enzymatic reaction provides an intracellular de novo source of dTMP, an essential precursor for DNA biosynthesis. In Corynebacterium glutamicum (strain R), this protein is Thymidylate synthase.